The following is a 625-amino-acid chain: tRNA uridine 5-carboxymethylaminomethyl modification enzyme MnmG (625 aa).

FAD-binding positions include 13 to 18 (GGGHAG), V125, and S182. 276–290 (GPRYCPSIEDKITRF) serves as a coordination point for NAD(+). An FAD-binding site is contributed by Q373.

Belongs to the MnmG family. As to quaternary structure, homodimer. Heterotetramer of two MnmE and two MnmG subunits. The cofactor is FAD.

Its subcellular location is the cytoplasm. Functionally, NAD-binding protein involved in the addition of a carboxymethylaminomethyl (cmnm) group at the wobble position (U34) of certain tRNAs, forming tRNA-cmnm(5)s(2)U34. The protein is tRNA uridine 5-carboxymethylaminomethyl modification enzyme MnmG of Lactococcus lactis subsp. cremoris (strain SK11).